Reading from the N-terminus, the 157-residue chain is Ribosome maturation factor RimP (157 aa).

Belongs to the RimP family.

Its subcellular location is the cytoplasm. Its function is as follows. Required for maturation of 30S ribosomal subunits. This chain is Ribosome maturation factor RimP, found in Bacillus pumilus (strain SAFR-032).